The primary structure comprises 124 residues: Iron-sulfur cluster insertion protein ErpA (124 aa).

Iron-sulfur cluster is bound by residues Cys-52, Cys-116, and Cys-118.

This sequence belongs to the HesB/IscA family. As to quaternary structure, homodimer. It depends on iron-sulfur cluster as a cofactor.

Required for insertion of 4Fe-4S clusters for at least IspG. In Vibrio atlanticus (strain LGP32) (Vibrio splendidus (strain Mel32)), this protein is Iron-sulfur cluster insertion protein ErpA.